The primary structure comprises 145 residues: D-aminoacyl-tRNA deacylase (145 aa).

Positions 137–138 (GP) match the Gly-cisPro motif, important for rejection of L-amino acids motif.

Belongs to the DTD family. As to quaternary structure, homodimer.

The protein resides in the cytoplasm. It carries out the reaction glycyl-tRNA(Ala) + H2O = tRNA(Ala) + glycine + H(+). It catalyses the reaction a D-aminoacyl-tRNA + H2O = a tRNA + a D-alpha-amino acid + H(+). In terms of biological role, an aminoacyl-tRNA editing enzyme that deacylates mischarged D-aminoacyl-tRNAs. Also deacylates mischarged glycyl-tRNA(Ala), protecting cells against glycine mischarging by AlaRS. Acts via tRNA-based rather than protein-based catalysis; rejects L-amino acids rather than detecting D-amino acids in the active site. By recycling D-aminoacyl-tRNA to D-amino acids and free tRNA molecules, this enzyme counteracts the toxicity associated with the formation of D-aminoacyl-tRNA entities in vivo and helps enforce protein L-homochirality. This is D-aminoacyl-tRNA deacylase from Lactobacillus delbrueckii subsp. bulgaricus (strain ATCC BAA-365 / Lb-18).